The chain runs to 433 residues: N-lysine methyltransferase SMYD2 (433 aa).

The region spanning 7–241 is the SET domain; sequence GGLERFCSAG…PGDEVFTSYI (235 aa). 17–19 contributes to the S-adenosyl-L-methionine binding site; sequence KGR. 8 residues coordinate Zn(2+): Cys-52, Cys-55, Cys-65, Cys-68, Cys-74, Cys-78, His-86, and Cys-90. An MYND-type zinc finger spans residues 52–90; the sequence is CECCFARKEGLSKCGRCKQAFYCDVECQKEDWPLHKLEC. S-adenosyl-L-methionine-binding positions include His-137, 206–207, and 258–260; these read NH and YFF. A Phosphoserine modification is found at Ser-283.

The protein belongs to the class V-like SAM-binding methyltransferase superfamily. As to quaternary structure, interacts (via MYND-type zinc finger) with EPB41L3. Interacts (via SET domain) with p53/TP53. Interacts with RB1 and HSP90AA1. Interacts with RNA polymerase II and HELZ. Interacts with SIN3A and HDAC1. As to expression, highly expressed in heart, skeletal muscle and brain tissue. During cardiac development, it is differentially expressed with highest expression in the neonatal heart while very low expression is detected at 12.5 dpc and adult. Specifically expressed in cardiomyocytes (at protein level).

It localises to the cytoplasm. The protein resides in the cytosol. Its subcellular location is the nucleus. It catalyses the reaction L-lysyl(4)-[histone H3] + 3 S-adenosyl-L-methionine = N(6),N(6),N(6)-trimethyl-L-lysyl(4)-[histone H3] + 3 S-adenosyl-L-homocysteine + 3 H(+). The catalysed reaction is L-lysyl-[protein] + S-adenosyl-L-methionine = N(6)-methyl-L-lysyl-[protein] + S-adenosyl-L-homocysteine + H(+). Functionally, protein-lysine N-methyltransferase that methylates both histones and non-histone proteins, including p53/TP53 and RB1. Specifically trimethylates histone H3 'Lys-4' (H3K4me3) in vivo. The activity requires interaction with HSP90alpha. Shows even higher methyltransferase activity on p53/TP53. Monomethylates 'Lys-370' of p53/TP53, leading to decreased DNA-binding activity and subsequent transcriptional regulation activity of p53/TP53. Monomethylates RB1 at 'Lys-860'. This is N-lysine methyltransferase SMYD2 (Smyd2) from Mus musculus (Mouse).